Reading from the N-terminus, the 219-residue chain is ATP synthase delta chain, chloroplastic (219 aa).

A chloroplast-targeting transit peptide spans M1–A33.

It belongs to the ATPase delta chain family. In terms of assembly, F-type ATPases have 2 components, F(1) - the catalytic core - and F(0) - the membrane proton channel. F(1) has five subunits: alpha(3), beta(3), gamma(1), delta(1), epsilon(1). F(0) has four main subunits: a(1), b(1), b'(1) and c(10-14). The alpha and beta chains form an alternating ring which encloses part of the gamma chain. F(1) is attached to F(0) by a central stalk formed by the gamma and epsilon chains, while a peripheral stalk is formed by the delta, b and b' chains.

The protein resides in the plastid. Its subcellular location is the chloroplast thylakoid membrane. Functionally, f(1)F(0) ATP synthase produces ATP from ADP in the presence of a proton or sodium gradient. F-type ATPases consist of two structural domains, F(1) containing the extramembraneous catalytic core and F(0) containing the membrane proton channel, linked together by a central stalk and a peripheral stalk. During catalysis, ATP synthesis in the catalytic domain of F(1) is coupled via a rotary mechanism of the central stalk subunits to proton translocation. Its function is as follows. This protein seems to be part of the stalk that links CF(0) to CF(1). It either transmits conformational changes from CF(0) into CF(1) or is implicated in proton conduction. This Chlamydomonas reinhardtii (Chlamydomonas smithii) protein is ATP synthase delta chain, chloroplastic.